We begin with the raw amino-acid sequence, 293 residues long: Probable E3 ubiquitin-protein ligase RNF144A-A (293 aa).

The segment at 16 to 237 (PLVSCKLCLG…YDKGPCRNKL (222 aa)) is TRIAD supradomain. Residues cysteine 20, cysteine 23, cysteine 43, cysteine 46, cysteine 111, cysteine 116, cysteine 135, cysteine 138, cysteine 143, cysteine 146, histidine 151, cysteine 156, cysteine 186, and cysteine 189 each contribute to the Zn(2+) site. Residues 20–70 (CKLCLGEFPLEQMTTITQCQCVFCTMCLKQYVELLIKEGFETAISCPDSAC) form an RING-type 1 zinc finger. The segment at 91–156 (QRYRKLQFEK…KASWHPDQDC (66 aa)) adopts an IBR-type zinc-finger fold. An RING-type 2; atypical zinc finger spans residues 186–215 (CPKCKVYIERDEGCAQMMCKNCKHAFCWYC). The active site involves cysteine 199. Residues cysteine 204, cysteine 207, cysteine 212, cysteine 215, histidine 227, and cysteine 233 each coordinate Zn(2+). A helical transmembrane segment spans residues 251-271 (VVGIFAGFGLLLLVASPFLLL).

It belongs to the RBR family. RNF144 subfamily.

The protein resides in the membrane. It catalyses the reaction [E2 ubiquitin-conjugating enzyme]-S-ubiquitinyl-L-cysteine + [acceptor protein]-L-lysine = [E2 ubiquitin-conjugating enzyme]-L-cysteine + [acceptor protein]-N(6)-ubiquitinyl-L-lysine.. It functions in the pathway protein modification; protein ubiquitination. In terms of biological role, E3 ubiquitin-protein ligase which accepts ubiquitin from E2 ubiquitin-conjugating enzymes ube2l3 and ube2l6 in the form of a thioester and then directly transfers the ubiquitin to targeted substrates. The polypeptide is Probable E3 ubiquitin-protein ligase RNF144A-A (rnf144aa) (Danio rerio (Zebrafish)).